The sequence spans 829 residues: High affinity cAMP-specific and IBMX-insensitive 3',5'-cyclic phosphodiesterase 8A (829 aa).

The disordered stretch occupies residues 16–46 (EDAPSPAAPPLSSGGPRLPQGQKTAALPRTR). The residue at position 20 (Ser-20) is a Phosphoserine. Residues 213 to 283 (ACNSVFTALE…DTINSCIRIG (71 aa)) enclose the PAS domain. Positions 287-329 (QGIYYAKKKNGDNIQQNVKIIPVIGQGGKIRHYVSIIRVCNGN) constitute a PAC domain. Residues 341–360 (SDTHTDNQTGKHKDRRKGSL) are disordered. Phosphoserine; by PKA is present on Ser-359. A phosphoserine mark is found at Ser-386 and Ser-457. The segment at 454 to 461 (RRLSGNEY) is involved in RAF1-binding. At Tyr-461 the chain carries Phosphotyrosine. The 341-residue stretch at 480-820 (SLDDVPPRIA…KYWKGLDEMK (341 aa)) folds into the PDEase domain. His-556 serves as the catalytic Proton donor. A divalent metal cation is bound by residues His-560, His-596, Asp-597, and Asp-726.

This sequence belongs to the cyclic nucleotide phosphodiesterase family. PDE8 subfamily. Interacts with RAF1. The interaction promotes RAF1 activity. Requires a divalent metal cation as cofactor. Phosphorylated at Ser-359 by PKA under elevated cAMP conditions, this enhances catalytic activity. As to expression, expressed in most tissues except thymus and peripheral blood leukocytes. Highest levels in testis, ovary, small intestine and colon.

The enzyme catalyses 3',5'-cyclic AMP + H2O = AMP + H(+). It participates in purine metabolism; 3',5'-cyclic AMP degradation; AMP from 3',5'-cyclic AMP: step 1/1. With respect to regulation, inhibited by dipyridimole. Insensitive to selective PDE inhibitors including rolipram and zaprinast as well as to the non-selective inhibitor, IBMX. Unaffected by cGMP. Functionally, hydrolyzes the second messenger cAMP, which is a key regulator of many important physiological processes. May be involved in maintaining basal levels of the cyclic nucleotide and/or in the cAMP regulation of germ cell development. Binding to RAF1 reduces RAF1 'Ser-259' inhibitory-phosphorylation and stimulates RAF1-dependent EGF-activated ERK-signaling. Protects against cell death induced by hydrogen peroxide and staurosporine. This is High affinity cAMP-specific and IBMX-insensitive 3',5'-cyclic phosphodiesterase 8A (PDE8A) from Homo sapiens (Human).